Reading from the N-terminus, the 55-residue chain is Transcriptional regulator CdrS (55 aa).

This sequence belongs to the CdrS family.

Its subcellular location is the cytoplasm. Transcriptional regulator which plays a central role in the regulation of cell division. Activates the expression of the gene encoding the cell division protein FtsZ2, and of other genes encoding proteins predicted to function in critical aspects of cell division. Required for normal cell division but not for cell elongation. May act during the transition from stasis to growth. The CdrSL-FtsZ2 transcriptional network might coordinate cell division timing with cell growth. This Halobacterium salinarum (strain ATCC 700922 / JCM 11081 / NRC-1) (Halobacterium halobium) protein is Transcriptional regulator CdrS.